The sequence spans 228 residues: Ribosomal RNA small subunit methyltransferase G (228 aa).

Residues G89, L94, 140-141 (VE), and R159 each bind S-adenosyl-L-methionine.

It belongs to the methyltransferase superfamily. RNA methyltransferase RsmG family.

Its subcellular location is the cytoplasm. The enzyme catalyses guanosine(527) in 16S rRNA + S-adenosyl-L-methionine = N(7)-methylguanosine(527) in 16S rRNA + S-adenosyl-L-homocysteine. Specifically methylates the N7 position of guanine in position 527 of 16S rRNA. This Burkholderia cenocepacia (strain HI2424) protein is Ribosomal RNA small subunit methyltransferase G.